The following is a 188-amino-acid chain: ATP synthase subunit b 1 (188 aa).

A helical membrane pass occupies residues 35–55 (VHFSSHFFWLAISFGFFYLFI).

This sequence belongs to the ATPase B chain family. In terms of assembly, F-type ATPases have 2 components, F(1) - the catalytic core - and F(0) - the membrane proton channel. F(1) has five subunits: alpha(3), beta(3), gamma(1), delta(1), epsilon(1). F(0) has three main subunits: a(1), b(2) and c(10-14). The alpha and beta chains form an alternating ring which encloses part of the gamma chain. F(1) is attached to F(0) by a central stalk formed by the gamma and epsilon chains, while a peripheral stalk is formed by the delta and b chains.

It localises to the cell inner membrane. Its function is as follows. F(1)F(0) ATP synthase produces ATP from ADP in the presence of a proton or sodium gradient. F-type ATPases consist of two structural domains, F(1) containing the extramembraneous catalytic core and F(0) containing the membrane proton channel, linked together by a central stalk and a peripheral stalk. During catalysis, ATP synthesis in the catalytic domain of F(1) is coupled via a rotary mechanism of the central stalk subunits to proton translocation. Component of the F(0) channel, it forms part of the peripheral stalk, linking F(1) to F(0). In Bartonella tribocorum (strain CIP 105476 / IBS 506), this protein is ATP synthase subunit b 1.